The primary structure comprises 671 residues: DNA ligase (671 aa).

NAD(+) is bound by residues 35 to 39 (DQQYD), 84 to 85 (SL), and Glu-113. The N6-AMP-lysine intermediate role is filled by Lys-115. Residues Arg-136, Glu-170, Lys-285, and Lys-309 each coordinate NAD(+). 4 residues coordinate Zn(2+): Cys-403, Cys-406, Cys-421, and Cys-426. The BRCT domain occupies 588 to 671 (TTQTIFTNKK…QIIENSQIKL (84 aa)).

It belongs to the NAD-dependent DNA ligase family. LigA subfamily. Mg(2+) is required as a cofactor. The cofactor is Mn(2+).

The catalysed reaction is NAD(+) + (deoxyribonucleotide)n-3'-hydroxyl + 5'-phospho-(deoxyribonucleotide)m = (deoxyribonucleotide)n+m + AMP + beta-nicotinamide D-nucleotide.. Its function is as follows. DNA ligase that catalyzes the formation of phosphodiester linkages between 5'-phosphoryl and 3'-hydroxyl groups in double-stranded DNA using NAD as a coenzyme and as the energy source for the reaction. It is essential for DNA replication and repair of damaged DNA. The protein is DNA ligase of Onion yellows phytoplasma (strain OY-M).